The chain runs to 134 residues: ATP synthase epsilon chain, chloroplastic (134 aa).

This sequence belongs to the ATPase epsilon chain family. In terms of assembly, F-type ATPases have 2 components, CF(1) - the catalytic core - and CF(0) - the membrane proton channel. CF(1) has five subunits: alpha(3), beta(3), gamma(1), delta(1), epsilon(1). CF(0) has three main subunits: a, b and c.

It is found in the plastid. The protein resides in the chloroplast thylakoid membrane. Its function is as follows. Produces ATP from ADP in the presence of a proton gradient across the membrane. The polypeptide is ATP synthase epsilon chain, chloroplastic (Pelargonium hortorum (Common geranium)).